Consider the following 457-residue polypeptide: Siroheme synthase (457 aa).

The tract at residues 1–204 (MDHLPIFCQL…ADAKAVSEIT (204 aa)) is precorrin-2 dehydrogenase /sirohydrochlorin ferrochelatase. Residues 22–23 (DV) and 43–44 (LA) each bind NAD(+). Phosphoserine is present on Ser128. Residues 216–457 (GEVVLVGAGP…RDKLNWFSNH (242 aa)) form a uroporphyrinogen-III C-methyltransferase region. Residue Pro225 participates in S-adenosyl-L-methionine binding. Catalysis depends on Asp248, which acts as the Proton acceptor. Lys270 functions as the Proton donor in the catalytic mechanism. S-adenosyl-L-methionine is bound by residues 301–303 (GGD), Ile306, 331–332 (TA), Met382, and Gly411.

The protein in the N-terminal section; belongs to the precorrin-2 dehydrogenase / sirohydrochlorin ferrochelatase family. In the C-terminal section; belongs to the precorrin methyltransferase family.

The enzyme catalyses uroporphyrinogen III + 2 S-adenosyl-L-methionine = precorrin-2 + 2 S-adenosyl-L-homocysteine + H(+). The catalysed reaction is precorrin-2 + NAD(+) = sirohydrochlorin + NADH + 2 H(+). It carries out the reaction siroheme + 2 H(+) = sirohydrochlorin + Fe(2+). It functions in the pathway cofactor biosynthesis; adenosylcobalamin biosynthesis; precorrin-2 from uroporphyrinogen III: step 1/1. The protein operates within cofactor biosynthesis; adenosylcobalamin biosynthesis; sirohydrochlorin from precorrin-2: step 1/1. Its pathway is porphyrin-containing compound metabolism; siroheme biosynthesis; precorrin-2 from uroporphyrinogen III: step 1/1. It participates in porphyrin-containing compound metabolism; siroheme biosynthesis; siroheme from sirohydrochlorin: step 1/1. It functions in the pathway porphyrin-containing compound metabolism; siroheme biosynthesis; sirohydrochlorin from precorrin-2: step 1/1. Multifunctional enzyme that catalyzes the SAM-dependent methylations of uroporphyrinogen III at position C-2 and C-7 to form precorrin-2 via precorrin-1. Then it catalyzes the NAD-dependent ring dehydrogenation of precorrin-2 to yield sirohydrochlorin. Finally, it catalyzes the ferrochelation of sirohydrochlorin to yield siroheme. The protein is Siroheme synthase of Citrobacter koseri (strain ATCC BAA-895 / CDC 4225-83 / SGSC4696).